The chain runs to 174 residues: D(1B) dopamine receptor (174 aa).

A helical transmembrane segment spans residues 1–10; the sequence is SILNLCIISV. The Cytoplasmic portion of the chain corresponds to 11 to 32; sequence DRYWAISRPFCYERKMTQRVAL. A helical transmembrane segment spans residues 33-54; sequence VMVGLAWTLSILISFIPVQLHW. Over 55-96 the chain is Extracellular; it reads HRDKVGSRDGLDPPSNLANGTPWEEAGESDRSAENCDSSLNR. The disordered stretch occupies residues 64 to 88; the sequence is GLDPPSNLANGTPWEEAGESDRSAE. Residue Asn-95 is glycosylated (N-linked (GlcNAc...) asparagine). Residues 97-119 traverse the membrane as a helical segment; sequence TYAISSSLISFYIPVAIMIVTYT. At 120 to 169 the chain is on the cytoplasmic side; sequence RIYRIAQVQIRRISSLERAAEHAQSCRSREACAPDSGLRASIKKETKVLK. A helical transmembrane segment spans residues 170-174; the sequence is TLSVI.

The protein belongs to the G-protein coupled receptor 1 family.

The protein resides in the cell membrane. Dopamine receptor whose activity is mediated by G proteins which activate adenylyl cyclase. The chain is D(1B) dopamine receptor (DRD5) from Bos taurus (Bovine).